Consider the following 317-residue polypeptide: MANTLEQLKSFTTIVADTGDIEAIKRSQPEDATTNPSLILKAAQIPEYSGLIDNAIAWAKTQSDNLETQIEDAADKLAVNIGLEILKLVPGRISTEVDARLSFDKTASIAKAHKLIRLYQEAGIDKSRILIKLASTWEGICAAKELEAEGINCNLTLLFSFAQARACAEAGVFLISPFVGRILDWYKKSTGKDYRASEDPGVVSVTDIYNYYKRHGYKTVVMGASFRNTGEIIELAGCDRLTIGPSLLEEMAASNTPVVRKLTPTTDTVAPGPVMSEAEFRWEMNQDAMAVEKLAEGIRNFAIDQGKLEEMLKAKLA.

Residue K132 is the Schiff-base intermediate with substrate of the active site.

Belongs to the transaldolase family. Type 1 subfamily. As to quaternary structure, homodimer.

It is found in the cytoplasm. The enzyme catalyses D-sedoheptulose 7-phosphate + D-glyceraldehyde 3-phosphate = D-erythrose 4-phosphate + beta-D-fructose 6-phosphate. It participates in carbohydrate degradation; pentose phosphate pathway; D-glyceraldehyde 3-phosphate and beta-D-fructose 6-phosphate from D-ribose 5-phosphate and D-xylulose 5-phosphate (non-oxidative stage): step 2/3. Its function is as follows. Transaldolase is important for the balance of metabolites in the pentose-phosphate pathway. This is Transaldolase from Shewanella amazonensis (strain ATCC BAA-1098 / SB2B).